The sequence spans 739 residues: Eukaryotic translation initiation factor 3 subunit B (739 aa).

The interval 1–98 is sufficient for interaction with HCR1 and TIF32; the sequence is MSINEEDYLQ…LFIQFKSTES (98 aa). A sufficient for interaction with PIC8 region spans residues 1 to 224; it reads MSINEEDYLQ…GIQSWGGANF (224 aa). The 88-residue stretch at 37–124 folds into the RRM domain; that stretch reads NYIIVDGAPI…HRLLVNKLSD (88 aa). 7 WD repeats span residues 190–229, 231–293, 301–339, 343–385, 453–502, 537–579, and 592–630; these read PRKGFTSKYAKFSPKGTYLFSIHPQGIQSWGGANFNSIKR, FHQQ…RTFA, QKEMPWPLVKWSYDDKYCARQGPDALAIYETESNFQLLD, VKVD…QTAR, ELKD…KGGV, IENK…ETNK, and DKFSGMTNISWDPSGRFVAAWSTSWLHAIENGYRLYEFT.

This sequence belongs to the eIF-3 subunit B family. As to quaternary structure, component of the eukaryotic translation initiation factor 3 (eIF-3) complex.

The protein resides in the cytoplasm. Its function is as follows. RNA-binding component of the eukaryotic translation initiation factor 3 (eIF-3) complex, which is involved in protein synthesis of a specialized repertoire of mRNAs and, together with other initiation factors, stimulates binding of mRNA and methionyl-tRNAi to the 40S ribosome. The eIF-3 complex specifically targets and initiates translation of a subset of mRNAs involved in cell proliferation. This chain is Eukaryotic translation initiation factor 3 subunit B, found in Candida albicans (strain SC5314 / ATCC MYA-2876) (Yeast).